Here is a 438-residue protein sequence, read N- to C-terminus: DEAD-box ATP-dependent RNA helicase 58, chloroplastic (438 aa).

The N-terminal 44 residues, 1–44, are a transit peptide targeting the chloroplast; sequence MAAFSGCASPLSTTLRSGLAPFTLRHRLRLRRLRASAATLREVC. The Q motif signature appears at 41–69; that stretch reads REVCAGRVPEHVLQRAEEVGYVVPTEVQE. Residues 72-245 enclose the Helicase ATP-binding domain; the sequence is LPVLLSGQDC…DCVQHKWTKT (174 aa). 85 to 92 is an ATP binding site; it reads AQTGSGKT. Positions 190 to 193 match the DEAD box motif; sequence DEVD. Residues 274–436 enclose the Helicase C-terminal domain; the sequence is RLHVLLSLLE…ELPVESMFAF (163 aa).

It belongs to the DEAD box helicase family.

It is found in the plastid. Its subcellular location is the chloroplast. The enzyme catalyses ATP + H2O = ADP + phosphate + H(+). The chain is DEAD-box ATP-dependent RNA helicase 58, chloroplastic from Oryza sativa subsp. japonica (Rice).